A 412-amino-acid chain; its full sequence is Dihydrolipoyllysine-residue acetyltransferase component of pyruvate dehydrogenase complex (412 aa).

The region spanning 2-78 (PIKILMPALS…PVNSLIAVLS (77 aa)) is the Lipoyl-binding domain. Lys43 is modified (N6-lipoyllysine). In terms of domain architecture, Peripheral subunit-binding (PSBD) spans 132-169 (FASPLAKRLAKMRNIRFESVKGSGPHGRIVKQDILSYT). The active site involves His385.

The protein belongs to the 2-oxoacid dehydrogenase family. As to quaternary structure, forms a 24-polypeptide structural core with octahedral symmetry. It depends on (R)-lipoate as a cofactor.

The enzyme catalyses N(6)-[(R)-dihydrolipoyl]-L-lysyl-[protein] + acetyl-CoA = N(6)-[(R)-S(8)-acetyldihydrolipoyl]-L-lysyl-[protein] + CoA. The pyruvate dehydrogenase complex catalyzes the overall conversion of pyruvate to acetyl-CoA and CO(2). It contains multiple copies of three enzymatic components: pyruvate dehydrogenase (E1), dihydrolipoamide acetyltransferase (E2) and lipoamide dehydrogenase (E3). The sequence is that of Dihydrolipoyllysine-residue acetyltransferase component of pyruvate dehydrogenase complex (pdhC) from Rickettsia conorii (strain ATCC VR-613 / Malish 7).